Here is an 899-residue protein sequence, read N- to C-terminus: MGRSLTCPFGISPACGAQASWSIFGVGTAEVPGTHSHSNQAAAMPHIPEDEEPPGEPQAAQTQDSPSAGPFPSPPTIVLTGDASSPEGETDKNLVNRAPSPHRRLSHRHLKVSTASLTSVDPSGHVIDLVNDQLPDISISEEDKKKNLALLEEAKLVSERFLTRRGRKSRSSLGDSPSAVSPNLSSGASPASSRSCSLTISTSPGLDICSGPQSPLPGAPPQQKGHEDGVSSPCPGEPNVSKGLADLKQNDQRKVSQGRLAPRSPTVEKTKELTVEQKENFDPLQHVEATPMAQASGASISGKMALNSPQPGPAEMELGRQLLKTAREGNPLPRTTAQGSGGTVSPHSLGQGSAGEPMGPKAGSKAELRSPVSRPPLIRGVSWDSSPEEPGPLLQKVLAKLPLAEEEKRFPGKAKPAKPPGLKDFQIQVQPVRMQKLTKLREEHILMRNQNLVGFKLPELSEAAEQDKGVSPELAPAAEEEESKSGLDVMPNISDILLRKLRVHKSLTGSAPPLTEKEVENVFVQLSLAFRNDSYTLESRINQAERERNLTEENTEKELENFKASITSSANIWYHCEHRETYQKLLEDIAVLHRLAARLSSRAEVVGAVRQEKRMSKATEVMMQYVENLKRTYEKDHAELMEFKKLANQNSSRSCGPSEDGVPRTARSMSLTMGKNMPRRRVSVAVVPKFNALNLPGQAPSSSPMPSLPALSESSNGKSSISVSPALPALLENGKTNAEANCEVGAPVPLPSCLEETSQETKAKAEEEAYSKGYQEGVKKTEELQDLKEEEEEEQKTESPEEPEEVEETQEDEKDQGSSKLEELVHFLQVMYPKLCQHWQVIWMMAAVMLVLSVVLGLYSSYNSCTEEADGPPGRSTCSAAQRDSWWSSGLQQELPAEQ.

Disordered regions lie at residues 32–110 (PGTH…HRHL), 164–286 (RRGR…PLQH), 324–391 (KTAR…EEPG), and 463–486 (AAEQDKGVSPELAPAAEEEESKSG). The segment covering 100-110 (SPHRRLSHRHL) has biased composition (basic residues). Ser-106 bears the Phosphoserine mark. The tract at residues 140 to 172 (SEEDKKKNLALLEEAKLVSERFLTRRGRKSRSS) is interaction with PRKG1. The segment covering 171–180 (SSLGDSPSAV) has biased composition (polar residues). The span at 181-203 (SPNLSSGASPASSRSCSLTISTS) shows a compositional bias: low complexity. Positions 266–281 (TVEKTKELTVEQKENF) are enriched in basic and acidic residues. Residues 333–351 (PRTTAQGSGGTVSPHSLGQ) show a composition bias toward polar residues. Ser-382 carries the post-translational modification Phosphoserine. The segment at 521-567 (NVFVQLSLAFRNDSYTLESRINQAERERNLTEENTEKELENFKASIT) is interaction with ITPR1. The stretch at 534 to 632 (SYTLESRINQ…MQYVENLKRT (99 aa)) forms a coiled coil. 2 positions are modified to phosphoserine: Ser-670 and Ser-683. Disordered regions lie at residues 695–722 (LPGQAPSSSPMPSLPALSESSNGKSSIS) and 757–818 (TSQE…DQGS). The segment covering 699–715 (APSSSPMPSLPALSESS) has biased composition (low complexity). Composition is skewed to basic and acidic residues over residues 759-770 (QETKAKAEEEAY) and 777-787 (GVKKTEELQDL). Acidic residues predominate over residues 788–814 (KEEEEEEQKTESPEEPEEVEETQEDEK). The chain crosses the membrane as a helical span at residues 839 to 859 (WQVIWMMAAVMLVLSVVLGLY). The interval 867–899 (EEADGPPGRSTCSAAQRDSWWSSGLQQELPAEQ) is disordered. Polar residues predominate over residues 876–892 (STCSAAQRDSWWSSGLQ).

In terms of assembly, part of cGMP kinase signaling complex at least composed of ACTA2/alpha-actin, CNN1/calponin H1, PLN/phospholamban, PRKG1 and ITPR1. Interacts with PRKG1/cGKI-beta and ITPR1/IP3R type I. Interacts with HCN4; regulates HCN4 channel activity. Phosphorylated by PRKG1/cGKI. Highly expressed in smooth muscle such as aorta, colon and uterus. Detected in the brain, in the thalamus, in the hippocampus and myenteric plexus. Highly expressed in megakaryocytes. Down-regulated during macrophage differentiation.

It is found in the membrane. It localises to the cytoplasm. The protein localises to the perinuclear region. The protein resides in the sarcoplasmic reticulum. Functionally, plays a role as NO/PRKG1-dependent regulator of IP3-induced calcium release; its phosphorylation by PRKG1 inhibits bradykinin and IP3-induced calcium release from intracellular stores. Recruits PRKG1 to the endoplasmic reticulum and may mediate the assembly of PRKG1 and ITPR1 in a macrocomplex. Involved in PRKG1 signaling cascade leading to inhibition of platelet activation and aggregation. Also mediates NO-dependent inhibition of calcium signaling in gastrointestinal smooth muscle contributing to NO-dependent relaxation. Plays a role in the regulation of cellular excitability by regulating the hyperpolarization-activated cyclic nucleotide-gated HCN4 channel activity. This is Inositol 1,4,5-triphosphate receptor associated 1 (Irag1) from Mus musculus (Mouse).